The primary structure comprises 447 residues: MLENIRDAVRKFLTGSTPYEKAVDEFIKDLQKSLISSDVNVKLVFSLTAKIKERLNKEKPPSVLERKEWFISIVYDELSKLFGGDKEPNVNPTKLPFIIMLVGVQGSGKTTTAGKLAYFYKKRGYKVGLVAADVYRPAAYDQLLQLGNQIGVQVYGEPNNQNPIEIAKKGVDIFVKNKMDIIIVDTAGRHGYGEETKLLEEMKEMYDVLKPDDVILVIDASIGQKAYDLASRFHQASPIGSVIITKMDGTAKGGGALSAVVATGATIKFIGTGEKIDELETFNAKRFVSRILGMGDIESILEKVKGLEEYDKIQKKMEDVMEGKGKLTLRDVYAQIIALRKMGPLSKVLQHIPGLGIMLPTPSEDQLKIGEEKIRRWLAALNSMTYKELENPNIIDKSRMRRIAEGSGLEVEEVRELLEWYNNMNRLLKMVKRRRGNIDKLFGGKIG.

Residues 103 to 110 (GVQGSGKT), 185 to 189 (DTAGR), and 245 to 248 (TKMD) contribute to the GTP site.

The protein belongs to the GTP-binding SRP family. SRP54 subfamily. In terms of assembly, part of the signal recognition particle protein translocation system, which is composed of SRP and FtsY. Archaeal SRP consists of a 7S RNA molecule of 300 nucleotides and two protein subunits: SRP54 and SRP19.

The protein resides in the cytoplasm. The enzyme catalyses GTP + H2O = GDP + phosphate + H(+). Functionally, involved in targeting and insertion of nascent membrane proteins into the cytoplasmic membrane. Binds to the hydrophobic signal sequence of the ribosome-nascent chain (RNC) as it emerges from the ribosomes. The SRP-RNC complex is then targeted to the cytoplasmic membrane where it interacts with the SRP receptor FtsY. In Saccharolobus solfataricus (strain ATCC 35092 / DSM 1617 / JCM 11322 / P2) (Sulfolobus solfataricus), this protein is Signal recognition particle 54 kDa protein.